The chain runs to 489 residues: Leukocyte immunoglobulin-like receptor subfamily A member 1 (489 aa).

A signal peptide spans 1 to 16 (MTPIVTVLICLRLSLG). Over 17–461 (PRTHVQAGTL…SHPQDYTVEN (445 aa)) the chain is Extracellular. 4 consecutive Ig-like C2-type domains span residues 27–116 (PKPT…PLEL), 119–224 (TGAY…GVSK), 226–315 (PSLS…DPLD), and 326–415 (PFIS…SDSL). An intrachain disulfide couples Cys-49 to Cys-98. A glycan (N-linked (GlcNAc...) asparagine) is linked at Asn-140. Cystine bridges form between Cys-145–Cys-197, Cys-157–Cys-167, and Cys-246–Cys-297. 3 N-linked (GlcNAc...) asparagine glycosylation sites follow: Asn-281, Asn-302, and Asn-341. Residues Cys-346 and Cys-397 are joined by a disulfide bond. The tract at residues 425-453 (TLSPPQNKSDSKAGAANTLSPSQNKTASH) is disordered. Asn-431 and Asn-448 each carry an N-linked (GlcNAc...) asparagine glycan. A compositionally biased stretch (polar residues) spans 441–453 (NTLSPSQNKTASH). The helical transmembrane segment at 462–482 (LIRMGIAGLVLVVLGILLFEA) threads the bilayer. At 483–489 (QHSQRSL) the chain is on the cytoplasmic side.

Detected in monocytes and B-cells.

The protein localises to the membrane. Functionally, may act as receptor for class I MHC antigens. The polypeptide is Leukocyte immunoglobulin-like receptor subfamily A member 1 (LILRA1) (Homo sapiens (Human)).